The sequence spans 358 residues: Stearoyl-CoA desaturase 2 (358 aa).

Over 1 to 71 (MPAHILQEIS…EGPPPKLEYV (71 aa)) the chain is Cytoplasmic. Residues 16–39 (TTTITAPPSGGQQNGGEKFEKSSH) are disordered. The chain crosses the membrane as a helical span at residues 72 to 92 (WRNIILMALLHLGALYGITLV). Substrate is bound at residue N74. At 93-96 (PSCK) the chain is on the lumenal side. Residues 97–117 (LYTCLFAYLYYVISALGITAG) form a helical membrane-spanning segment. Residues 118–216 (AHRLWSHRTY…EKLVMFQRRY (99 aa)) are Cytoplasmic-facing. The Fe cation site is built by H119 and H124. Residues 119-124 (HRLWSH) carry the Histidine box-1 motif. Substrate contacts are provided by N147, R154, and D155. Positions 156, 159, and 160 each coordinate Fe cation. The Histidine box-2 signature appears at 156–160 (HRAHH). Substrate is bound by residues R187 and K188. Residues 217 to 236 (YKPGLLLMCFVLPTLVPWYC) traverse the membrane as a helical segment. Residues 237 to 240 (WGET) are Lumenal-facing. Residues 241–262 (FVNSLCVSTFLRYAVVLNATWL) traverse the membrane as a helical segment. W261 is a binding site for substrate. Residues 263–358 (VNSAAHLYGY…RTGDGSCKSG (96 aa)) are Cytoplasmic-facing. Fe cation is bound by residues H268, H297, H300, and H301. A Histidine box-3 motif is present at residues 297–301 (HNYHH).

Belongs to the fatty acid desaturase type 1 family. The cofactor is Fe(2+). As to expression, detected in brain and skin. Highly expressed in brain, and detected at low levels in heart, stomach, lung and testis. Detected both in dermis and epidermis.

The protein resides in the endoplasmic reticulum membrane. The protein localises to the microsome membrane. The enzyme catalyses octadecanoyl-CoA + 2 Fe(II)-[cytochrome b5] + O2 + 2 H(+) = (9Z)-octadecenoyl-CoA + 2 Fe(III)-[cytochrome b5] + 2 H2O. It carries out the reaction hexadecanoyl-CoA + 2 Fe(II)-[cytochrome b5] + O2 + 2 H(+) = (9Z)-hexadecenoyl-CoA + 2 Fe(III)-[cytochrome b5] + 2 H2O. Stearoyl-CoA desaturase that utilizes O(2) and electrons from reduced cytochrome b5 to introduce the first double bond into saturated fatty acyl-CoA substrates. Catalyzes the insertion of a cis double bond at the delta-9 position into fatty acyl-CoA substrates including palmitoyl-CoA and stearoyl-CoA. Gives rise to a mixture of 16:1 and 18:1 unsaturated fatty acids. Contributes to the biosynthesis of membrane phospholipids, cholesterol esters and triglycerides, especially during embryonic development and in neonates. Important for normal permeability barrier function of the skin in neonates. This chain is Stearoyl-CoA desaturase 2 (Scd2), found in Mus musculus (Mouse).